The following is a 101-amino-acid chain: Small ribosomal subunit protein uS14 (101 aa).

The protein belongs to the universal ribosomal protein uS14 family. As to quaternary structure, part of the 30S ribosomal subunit. Contacts proteins S3 and S10.

Binds 16S rRNA, required for the assembly of 30S particles and may also be responsible for determining the conformation of the 16S rRNA at the A site. The polypeptide is Small ribosomal subunit protein uS14 (Brucella abortus (strain 2308)).